A 229-amino-acid polypeptide reads, in one-letter code: Ribonuclease HII (229 aa).

The 192-residue stretch at 34–225 (GPVAGVDEAG…VKAAHDQWLQ (192 aa)) folds into the RNase H type-2 domain. A divalent metal cation is bound by residues D40, E41, and D134.

Belongs to the RNase HII family. Requires Mn(2+) as cofactor. Mg(2+) is required as a cofactor.

It localises to the cytoplasm. It carries out the reaction Endonucleolytic cleavage to 5'-phosphomonoester.. In terms of biological role, endonuclease that specifically degrades the RNA of RNA-DNA hybrids. The protein is Ribonuclease HII of Corynebacterium diphtheriae (strain ATCC 700971 / NCTC 13129 / Biotype gravis).